Here is a 402-residue protein sequence, read N- to C-terminus: 1-deoxy-D-xylulose 5-phosphate reductoisomerase (402 aa).

NADPH contacts are provided by threonine 21, glycine 22, serine 23, isoleucine 24, glycine 47, asparagine 50, and asparagine 127. 1-deoxy-D-xylulose 5-phosphate is bound at residue lysine 128. An NADPH-binding site is contributed by glutamate 129. Aspartate 151 lines the Mn(2+) pocket. 1-deoxy-D-xylulose 5-phosphate contacts are provided by serine 152, glutamate 153, serine 177, and histidine 200. A Mn(2+)-binding site is contributed by glutamate 153. Glycine 206 is an NADPH binding site. Positions 213, 218, 219, and 222 each coordinate 1-deoxy-D-xylulose 5-phosphate. Glutamate 222 lines the Mn(2+) pocket.

It belongs to the DXR family. Requires Mg(2+) as cofactor. The cofactor is Mn(2+).

It carries out the reaction 2-C-methyl-D-erythritol 4-phosphate + NADP(+) = 1-deoxy-D-xylulose 5-phosphate + NADPH + H(+). The protein operates within isoprenoid biosynthesis; isopentenyl diphosphate biosynthesis via DXP pathway; isopentenyl diphosphate from 1-deoxy-D-xylulose 5-phosphate: step 1/6. Its function is as follows. Catalyzes the NADPH-dependent rearrangement and reduction of 1-deoxy-D-xylulose-5-phosphate (DXP) to 2-C-methyl-D-erythritol 4-phosphate (MEP). This chain is 1-deoxy-D-xylulose 5-phosphate reductoisomerase, found in Mycobacterium ulcerans (strain Agy99).